The primary structure comprises 131 residues: Small ribosomal subunit protein uS8 (131 aa).

This sequence belongs to the universal ribosomal protein uS8 family. In terms of assembly, part of the 30S ribosomal subunit. Contacts proteins S5 and S12.

Functionally, one of the primary rRNA binding proteins, it binds directly to 16S rRNA central domain where it helps coordinate assembly of the platform of the 30S subunit. This Campylobacter jejuni (strain RM1221) protein is Small ribosomal subunit protein uS8.